The chain runs to 357 residues: MKMTFRWYGENDPVKLEYIRQIPGIYGIVSAIYDVPVGEVWPVERLQALRARVEGVGLRFEVVESVPVHEDIKLGKPARERLIDNFCQNIRNCAAAGVKVICYNFMPVFDWTRTEMARELPDGSLTLAFDAAAVAEIDPEQGISLPGWDSSYRPEQLRAVLDEYKNVSEEALWEHLEHFLRRIIPVAEEVGVRMAMHPDDPPRPIFGLPRIVKNRDDLMRLVKTVDSPANGITLCSGSLGADLCNNIVSLVREFGGMGRIPFGHLRNVAVQEDGTFFESAHLSCEGSLDMAAIVKAYHDVGFDGYVRPDHGRMIWGETGKPGYGLYDRALGLVYLNGLWEATCKLSPGPAAKVPAPG.

This sequence belongs to the mannonate dehydratase family. Fe(2+) is required as a cofactor. Mn(2+) serves as cofactor.

The enzyme catalyses D-mannonate = 2-dehydro-3-deoxy-D-gluconate + H2O. It functions in the pathway carbohydrate metabolism; pentose and glucuronate interconversion. In terms of biological role, catalyzes the dehydration of D-mannonate. In Sorangium cellulosum (strain So ce56) (Polyangium cellulosum (strain So ce56)), this protein is Mannonate dehydratase.